Here is a 273-residue protein sequence, read N- to C-terminus: Putative phosphoenolpyruvate synthase regulatory protein (273 aa).

153–160 (GVSRCGKT) serves as a coordination point for ADP.

This sequence belongs to the pyruvate, phosphate/water dikinase regulatory protein family. PSRP subfamily.

It catalyses the reaction [pyruvate, water dikinase] + ADP = [pyruvate, water dikinase]-phosphate + AMP + H(+). The enzyme catalyses [pyruvate, water dikinase]-phosphate + phosphate + H(+) = [pyruvate, water dikinase] + diphosphate. Bifunctional serine/threonine kinase and phosphorylase involved in the regulation of the phosphoenolpyruvate synthase (PEPS) by catalyzing its phosphorylation/dephosphorylation. This chain is Putative phosphoenolpyruvate synthase regulatory protein, found in Sodalis glossinidius (strain morsitans).